The following is a 673-amino-acid chain: Protein transport Sec1a (673 aa).

Positions 538–591 (SSHKEESEARTGSVRKSSAPTAVPERKATPHSMRSRRTATWARPHSSDDGYSSD) are disordered.

This sequence belongs to the STXBP/unc-18/SEC1 family. As to quaternary structure, does not bind the syntaxin KNOLLE.

In terms of biological role, involved in the vesicle trafficking. Binds syntaxins. The polypeptide is Protein transport Sec1a (SEC1A) (Arabidopsis thaliana (Mouse-ear cress)).